An 885-amino-acid polypeptide reads, in one-letter code: Envelope glycoprotein gp160 (885 aa).

The first 23 residues, 1 to 23 (MGCLGNQLLIALLLVSVLEICCV), serve as a signal peptide directing secretion. Residues 24 to 700 (QYVTVFYGVP…TSWIRYIQYG (677 aa)) are Extracellular-facing. A glycan (N-linked (GlcNAc...) asparagine; by host) is linked at asparagine 37. A disulfide bridge links cysteine 44 with cysteine 57. N-linked (GlcNAc...) asparagine; by host glycans are attached at residues asparagine 70, asparagine 114, asparagine 148, asparagine 156, asparagine 173, asparagine 186, asparagine 201, asparagine 213, asparagine 245, asparagine 255, asparagine 279, asparagine 285, asparagine 296, asparagine 307, asparagine 317, asparagine 372, and asparagine 378. 5 cysteine pairs are disulfide-bonded: cysteine 101–cysteine 221, cysteine 108–cysteine 212, cysteine 113–cysteine 170, cysteine 234–cysteine 264, and cysteine 244–cysteine 256. The segment at 113–169 (CNKTETDRWGLTGNAGTTTTAITTTATPSVAENVINESNPCIKNNSCAGLEQEPMIG) is V1. The tract at residues 170–212 (CKFNMTGLNRDKKKEYNETWYSRDLICEQSANESESKCYMHHC) is V2. The segment at 312 to 344 (CRRPENKTVLPVTIMSGLVFHSQPINERPKQAW) is V3. Cysteine 312 and cysteine 345 are joined by a disulfide. Cystine bridges form between cysteine 396-cysteine 465 and cysteine 403-cysteine 438. The V4 stretch occupies residues 403–438 (CKMNWFLNWVEDRDQKGGRWKQQNRKEQQKKNYVPC). N-linked (GlcNAc...) asparagine; by host glycosylation is found at asparagine 466, asparagine 482, and asparagine 485. Positions 481-488 (SNETNITM) are V5. The fusion peptide stretch occupies residues 532–552 (GVFVLGFLGFLATAGSAMGAA). Positions 595–611 (LQTRVTAIEKYLKDQAQ) are immunosuppression. 3 N-linked (GlcNAc...) asparagine; by host glycosylation sites follow: asparagine 631, asparagine 640, and asparagine 656. Residues 640 to 672 (NMTWQEWERQVDFLEANITQLLEEAQIQQEKNM) are a coiled coil. Positions 677–698 (KLNSWDIFGNWFDLTSWIRYIQ) are MPER; binding to GalCer. Residues 701–721 (VLIVLGVIGLRIVIYVVQMLA) form a helical membrane-spanning segment. Over 722-885 (RLRQGYRPVF…IRQGLELTLL (164 aa)) the chain is Cytoplasmic. Residues 727–730 (YRPV) carry the YXXV motif; contains endocytosis signal motif. Positions 743–764 (IHKGQEPPTKEGEEGDGGDRGG) are disordered. Positions 745–764 (KGQEPPTKEGEEGDGGDRGG) are enriched in basic and acidic residues. A lipid anchor (S-palmitoyl cysteine; by host) is attached at cysteine 793. Positions 884 to 885 (LL) match the Di-leucine internalization motif motif.

The mature envelope protein (Env) consists of a homotrimer of non-covalently associated gp120-gp41 heterodimers. The resulting complex protrudes from the virus surface as a spike. Interacts with host CD4 and CCR5. Gp120 also interacts with the C-type lectins CD209/DC-SIGN and CLEC4M/DC-SIGNR (collectively referred to as DC-SIGN(R)). As to quaternary structure, the mature envelope protein (Env) consists of a homotrimer of non-covalently associated gp120-gp41 heterodimers. The resulting complex protrudes from the virus surface as a spike. In terms of processing, specific enzymatic cleavages in vivo yield mature proteins. Envelope glycoproteins are synthesized as an inactive precursor that is heavily N-glycosylated and processed likely by host cell furin in the Golgi to yield the mature SU and TM proteins. The cleavage site between SU and TM requires the minimal sequence [KR]-X-[KR]-R. Post-translationally, palmitoylation of the transmembrane protein and of Env polyprotein (prior to its proteolytic cleavage) is essential for their association with host cell membrane lipid rafts. Palmitoylation is therefore required for envelope trafficking to classical lipid rafts, but not for viral replication.

It is found in the virion membrane. The protein localises to the host cell membrane. It localises to the host endosome membrane. The surface protein gp120 (SU) attaches the virus to the host lymphoid cell by binding to the primary receptor CD4. This interaction induces a structural rearrangement creating a high affinity binding site for a chemokine coreceptor like CCR5. This peculiar 2 stage receptor-interaction strategy allows gp120 to maintain the highly conserved coreceptor-binding site in a cryptic conformation, protected from neutralizing antibodies. These changes are transmitted to the transmembrane protein gp41 and are thought to activate its fusogenic potential by unmasking its fusion peptide. In terms of biological role, surface protein gp120 (SU) may target the virus to gut-associated lymphoid tissue (GALT) by binding host ITGA4/ITGB7 (alpha-4/beta-7 integrins), a complex that mediates T-cell migration to the GALT. Interaction between gp120 and ITGA4/ITGB7 would allow the virus to enter GALT early in the infection, infecting and killing most of GALT's resting CD4+ T-cells. This T-cell depletion is believed to be the major insult to the host immune system leading to AIDS. Its function is as follows. The surface protein gp120 is a ligand for CD209/DC-SIGN and CLEC4M/DC-SIGNR, which are respectively found on dendritic cells (DCs), and on endothelial cells of liver sinusoids and lymph node sinuses. These interactions allow capture of viral particles at mucosal surfaces by these cells and subsequent transmission to permissive cells. DCs are professional antigen presenting cells, critical for host immunity by inducing specific immune responses against a broad variety of pathogens. They act as sentinels in various tissues where they take up antigen, process it, and present it to T-cells following migration to lymphoid organs. SIV subverts the migration properties of dendritic cells to gain access to CD4+ T-cells in lymph nodes. Virus transmission to permissive T-cells occurs either in trans (without DCs infection, through viral capture and transmission), or in cis (following DCs productive infection, through the usual CD4-gp120 interaction), thereby inducing a robust infection. In trans infection, bound virions remain infectious over days and it is proposed that they are not degraded, but protected in non-lysosomal acidic organelles within the DCs close to the cell membrane thus contributing to the viral infectious potential during DCs' migration from the periphery to the lymphoid tissues. On arrival at lymphoid tissues, intact virions recycle back to DCs' cell surface allowing virus transmission to CD4+ T-cells. Virion capture also seems to lead to MHC-II-restricted viral antigen presentation, and probably to the activation of SIV-specific CD4+ cells. Functionally, the transmembrane protein gp41 (TM) acts as a class I viral fusion protein. Under the current model, the protein has at least 3 conformational states: pre-fusion native state, pre-hairpin intermediate state, and post-fusion hairpin state. During fusion of viral and target intracellular membranes, the coiled coil regions (heptad repeats) assume a trimer-of-hairpins structure, positioning the fusion peptide in close proximity to the C-terminal region of the ectodomain. The formation of this structure appears to drive apposition and subsequent fusion of viral and target cell membranes. Complete fusion occurs in host cell endosomes. The virus undergoes clathrin-dependent internalization long before endosomal fusion, thus minimizing the surface exposure of conserved viral epitopes during fusion and reducing the efficacy of inhibitors targeting these epitopes. Membranes fusion leads to delivery of the nucleocapsid into the cytoplasm. The envelope glycoprotein gp160 precursor down-modulates cell surface CD4 antigen by interacting with it in the endoplasmic reticulum and blocking its transport to the cell surface. In terms of biological role, the gp120-gp41 heterodimer allows rapid transcytosis of the virus through CD4 negative cells such as simple epithelial monolayers of the intestinal, rectal and endocervical epithelial barriers. Both gp120 and gp41 specifically recognize glycosphingolipids galactosyl-ceramide (GalCer) or 3' sulfo-galactosyl-ceramide (GalS) present in the lipid rafts structures of epithelial cells. Binding to these alternative receptors allows the rapid transcytosis of the virus through the epithelial cells. This transcytotic vesicle-mediated transport of virions from the apical side to the basolateral side of the epithelial cells does not involve infection of the cells themselves. This is Envelope glycoprotein gp160 (env) from Cercopithecidae (Old World monkeys).